The chain runs to 182 residues: Inner membrane assembly complex subunit 17 (182 aa).

Residues 1-45 constitute a mitochondrion transit peptide; sequence MLKRRSNALITLSRTKLFPITTVAYYHRRLLNQQRRAVSTSPKKE. The Mitochondrial matrix segment spans residues 46–107; that stretch reads IKSLEDLANL…EIPVKRFIRP (62 aa). The helical transmembrane segment at 108–127 threads the bilayer; the sequence is LWMFILMGSSVYLLLHFSWW. Residues 128–158 are a coiled coil; that stretch reads KLEHEERESQLKKEVEILEHQLNELIVQDKT. Residues 128–182 are Mitochondrial intermembrane-facing; the sequence is KLEHEERESQLKKEVEILEHQLNELIVQDKTHNTSRGKGSNESTHMKPWYRRWFW.

The protein belongs to the INA17 family. In terms of assembly, component of the inner membrane assembly (INA) complex, composed of INA17 and INA22. Interacts with a subset of F(1)F(0)-ATP synthase subunits of the F(1)-domain and the peripheral stalk.

The protein resides in the mitochondrion inner membrane. Functionally, component of the INA complex (INAC) that promotes the biogenesis of mitochondrial F(1)F(0)-ATP synthase. INAC facilitates the assembly of the peripheral stalk and promotes the assembly of the catalytic F(1)-domain with the membrane-embedded F(0)-domain. The protein is Inner membrane assembly complex subunit 17 of Saccharomyces cerevisiae (strain RM11-1a) (Baker's yeast).